The sequence spans 620 residues: Chaperone protein HscA homolog (620 aa).

It belongs to the heat shock protein 70 family.

Its function is as follows. Chaperone involved in the maturation of iron-sulfur cluster-containing proteins. Has a low intrinsic ATPase activity which is markedly stimulated by HscB. This is Chaperone protein HscA homolog from Shewanella piezotolerans (strain WP3 / JCM 13877).